A 430-amino-acid chain; its full sequence is Mothers against decapentaplegic homolog 9 (430 aa).

The region spanning 16 to 140 (PAVKRLLGWK…YRRVETPVLP (125 aa)) is the MH1 domain. 4 residues coordinate Zn(2+): C68, C113, C125, and H130. Residues 186–222 (CPAPPSSPGHVFPQSPCPTSYPHSPGSPSESDSPYQH) are disordered. Over residues 202–221 (CPTSYPHSPGSPSESDSPYQ) the composition is skewed to polar residues. Residues 236-430 (WCSVAYYELN…SPHNPISSVS (195 aa)) form the MH2 domain.

Belongs to the dwarfin/SMAD family. As to quaternary structure, interaction with the co-SMAD SMAD4. Interacts with PEBP2-alpha subunit. Interacts with RANBP3L. Post-translationally, phosphorylated on serine by BMP (bone morphogenetic proteins) type 1 receptor kinase and activin type I receptor-like kinases (ALK-2, ALK-3 and ALK-6).

The protein resides in the cytoplasm. It is found in the nucleus. In terms of biological role, transcriptional modulator activated by BMP (bone morphogenetic proteins) type 1 receptor kinase. SMAD9 is a receptor-regulated SMAD (R-SMAD). Has been shown to be activated by activin type I receptor-like kinases (ALK-2, ALK-3, ALK-6) which stimulate heteromerization between SMAD9 and SMAD4. May play a role in osteoblast differentiation and maturation. The protein is Mothers against decapentaplegic homolog 9 (Smad9) of Mus musculus (Mouse).